Here is a 417-residue protein sequence, read N- to C-terminus: Serine hydroxymethyltransferase (417 aa).

Residues Leu-121 and Gly-125–Leu-127 contribute to the (6S)-5,6,7,8-tetrahydrofolate site. Residue Lys-229 is modified to N6-(pyridoxal phosphate)lysine. Residue Ser-355 to Phe-357 coordinates (6S)-5,6,7,8-tetrahydrofolate.

This sequence belongs to the SHMT family. As to quaternary structure, homodimer. Pyridoxal 5'-phosphate is required as a cofactor.

It localises to the cytoplasm. The enzyme catalyses (6R)-5,10-methylene-5,6,7,8-tetrahydrofolate + glycine + H2O = (6S)-5,6,7,8-tetrahydrofolate + L-serine. The protein operates within one-carbon metabolism; tetrahydrofolate interconversion. It participates in amino-acid biosynthesis; glycine biosynthesis; glycine from L-serine: step 1/1. Functionally, catalyzes the reversible interconversion of serine and glycine with tetrahydrofolate (THF) serving as the one-carbon carrier. This reaction serves as the major source of one-carbon groups required for the biosynthesis of purines, thymidylate, methionine, and other important biomolecules. Also exhibits THF-independent aldolase activity toward beta-hydroxyamino acids, producing glycine and aldehydes, via a retro-aldol mechanism. This Shewanella denitrificans (strain OS217 / ATCC BAA-1090 / DSM 15013) protein is Serine hydroxymethyltransferase.